A 1034-amino-acid polypeptide reads, in one-letter code: Kinesin-like protein KIF28 (1034 aa).

Residues 16-363 (SVRVAVRVRP…LRYAERAKKV (348 aa)) form the Kinesin motor domain. ATP is bound at residue 119 to 126 (GQTGSGKS). In terms of domain architecture, FHA spans 465-528 (CEVGRAASNA…LQHLDRIILG (64 aa)). Coiled-coil stretches lie at residues 875 to 904 (NQVP…LRGE) and 994 to 1027 (HQQS…KKKE).

This sequence belongs to the TRAFAC class myosin-kinesin ATPase superfamily. Kinesin family.

Its subcellular location is the mitochondrion membrane. Microtubule-dependent motor protein required for mitochondrion morphology and transport of mitochondria in neuronal cells. The polypeptide is Kinesin-like protein KIF28 (Rattus norvegicus (Rat)).